We begin with the raw amino-acid sequence, 100 residues long: Ferredoxin (100 aa).

A propeptide spanning residues 1 to 8 (MLSQVCRF) is cleaved from the precursor. Residues 9-100 (GTITAVKGGV…GENDGAVFEL (92 aa)) enclose the 2Fe-2S ferredoxin-type domain. [2Fe-2S] cluster-binding residues include cysteine 46, cysteine 52, cysteine 55, and cysteine 85.

Requires [2Fe-2S] cluster as cofactor.

It is found in the hydrogenosome. Its function is as follows. Ferredoxins are iron-sulfur proteins that transfer electrons in a wide variety of metabolic reactions. It links pyruvate:ferredoxin oxidoreductase to hydrogenase. The polypeptide is Ferredoxin (Trichomonas vaginalis).